An 89-amino-acid polypeptide reads, in one-letter code: Small ribosomal subunit protein uS19 (89 aa).

It belongs to the universal ribosomal protein uS19 family.

Functionally, protein S19 forms a complex with S13 that binds strongly to the 16S ribosomal RNA. This is Small ribosomal subunit protein uS19 from Porphyromonas gingivalis (strain ATCC 33277 / DSM 20709 / CIP 103683 / JCM 12257 / NCTC 11834 / 2561).